A 324-amino-acid polypeptide reads, in one-letter code: Germination protease (324 aa).

A propeptide spanning residues 1-10 (MIIVLGIRTD) is cleaved from the precursor.

It belongs to the peptidase A25 family. In terms of assembly, homotetramer. In terms of processing, autoproteolytically processed. The inactive tetrameric zymogen termed p46 autoprocesses to a smaller form termed p41, which is active only during spore germination.

It catalyses the reaction Endopeptidase action with P4 Glu or Asp, P1 preferably Glu &gt; Asp, P1' hydrophobic and P2' Ala.. Functionally, initiates the rapid degradation of small, acid-soluble proteins during spore germination. This chain is Germination protease, found in Caldanaerobacter subterraneus subsp. tengcongensis (strain DSM 15242 / JCM 11007 / NBRC 100824 / MB4) (Thermoanaerobacter tengcongensis).